We begin with the raw amino-acid sequence, 333 residues long: UDP-3-O-acylglucosamine N-acyltransferase 2 (333 aa).

His243 (proton acceptor) is an active-site residue.

This sequence belongs to the transferase hexapeptide repeat family. LpxD subfamily. As to quaternary structure, homotrimer.

It carries out the reaction a UDP-3-O-[(3R)-3-hydroxyacyl]-alpha-D-glucosamine + a (3R)-hydroxyacyl-[ACP] = a UDP-2-N,3-O-bis[(3R)-3-hydroxyacyl]-alpha-D-glucosamine + holo-[ACP] + H(+). It functions in the pathway bacterial outer membrane biogenesis; LPS lipid A biosynthesis. Its function is as follows. Catalyzes the N-acylation of UDP-3-O-acylglucosamine using 3-hydroxyacyl-ACP as the acyl donor. Is involved in the biosynthesis of lipid A, a phosphorylated glycolipid that anchors the lipopolysaccharide to the outer membrane of the cell. In Koribacter versatilis (strain Ellin345), this protein is UDP-3-O-acylglucosamine N-acyltransferase 2.